We begin with the raw amino-acid sequence, 221 residues long: Ribonuclease 3 (221 aa).

Residues 1–123 enclose the RNase III domain; it reads MERTGHAFAD…LIAVLYLDGG (123 aa). Glu36 contacts Mg(2+). Asp40 is a catalytic residue. Mg(2+) contacts are provided by Asp109 and Glu112. The active site involves Glu112. The region spanning 148–217 is the DRBM domain; it reads DAKTELQEWA…AAALLLREGV (70 aa).

The protein belongs to the ribonuclease III family. As to quaternary structure, homodimer. Requires Mg(2+) as cofactor.

The protein resides in the cytoplasm. It carries out the reaction Endonucleolytic cleavage to 5'-phosphomonoester.. Its function is as follows. Digests double-stranded RNA. Involved in the processing of primary rRNA transcript to yield the immediate precursors to the large and small rRNAs (23S and 16S). Processes some mRNAs, and tRNAs when they are encoded in the rRNA operon. Processes pre-crRNA and tracrRNA of type II CRISPR loci if present in the organism. This Mesorhizobium japonicum (strain LMG 29417 / CECT 9101 / MAFF 303099) (Mesorhizobium loti (strain MAFF 303099)) protein is Ribonuclease 3.